Here is a 470-residue protein sequence, read N- to C-terminus: Putative multidrug resistance protein MdtD (470 aa).

At 1 to 11 (MTELPDNTRWQ) the chain is on the periplasmic side. Residues 12 to 32 (LWIVAFGFFMQSLDTTIVNTA) form a helical membrane-spanning segment. The Cytoplasmic portion of the chain corresponds to 33–48 (LPSMAKSLGESPLHMH). The chain crosses the membrane as a helical span at residues 49-69 (MVVVSYVLTVAVMLPASGWLA). Residues 70-76 (DKIGVRN) are Periplasmic-facing. The chain crosses the membrane as a helical span at residues 77–97 (IFFAAIVLFTLGSLFCALSGT). Topologically, residues 98-101 (LNQL) are cytoplasmic. A helical transmembrane segment spans residues 102–124 (VLARVLQGVGGAMMVPVGRLTVM). The Periplasmic portion of the chain corresponds to 125-137 (KIVPRTQYMAAMT). A helical transmembrane segment spans residues 138–158 (FVTLPGQIGPLLGPALGGVLV). Residues 159-164 (EYASWH) lie on the Cytoplasmic side of the membrane. The helical transmembrane segment at 165–185 (WIFLINIPVGIVGAMATFMLM) threads the bilayer. Residues 186–196 (PNYTIETRRFD) lie on the Periplasmic side of the membrane. Residues 197 to 217 (LPGFLLLAIGMAVLTLALDGS) traverse the membrane as a helical segment. Topologically, residues 218–224 (KSMGISP) are cytoplasmic. Residues 225 to 245 (WTLAGLAAGGAAAILLYLFHA) form a helical membrane-spanning segment. The Periplasmic portion of the chain corresponds to 246 to 262 (KKNSGALFSLRLFRTPT). A helical membrane pass occupies residues 263 to 283 (FSLGLLGSFAGRIGSGMLPFM). Residues 284–285 (TP) are Cytoplasmic-facing. Residues 286-306 (VFLQIGLGFSPFHAGLMMIPM) form a helical membrane-spanning segment. Topologically, residues 307–341 (VLGSMGMKRIVVQIVNRFGYRRVLVATTLGLALVS) are periplasmic. A helical membrane pass occupies residues 342–362 (LLFMSVALLGWYYLLPLVLLL). The Cytoplasmic segment spans residues 363-395 (QGMVNSARFSSMNTLTLKDLPDTLASSGNSLLS). Residues 396 to 416 (MIMQLSMSIGVTIAGMLLGMF) traverse the membrane as a helical segment. Residues 417-430 (GQQHIGIDSSATHH) lie on the Periplasmic side of the membrane. Residues 431 to 451 (VFMYTWLCMAVIIALPAIIFA) form a helical membrane-spanning segment. Topologically, residues 452–470 (RVPNDTQQNMVISRRKRSL) are cytoplasmic.

This sequence belongs to the major facilitator superfamily. TCR/Tet family.

The protein localises to the cell inner membrane. The sequence is that of Putative multidrug resistance protein MdtD from Salmonella dublin (strain CT_02021853).